A 133-amino-acid chain; its full sequence is Large ribosomal subunit protein uL15 (133 aa).

Residues 1 to 58 (MALQNLTPAPGSTHATKRLGRGQGSGNGKTAGKGNKGQRARKGYNEKRGFEGGQQPLQ) form a disordered region. A compositionally biased stretch (gly residues) spans 21–35 (RGQGSGNGKTAGKGN).

It belongs to the universal ribosomal protein uL15 family. In terms of assembly, part of the 50S ribosomal subunit.

Its function is as follows. Binds to the 23S rRNA. The polypeptide is Large ribosomal subunit protein uL15 (Campylobacter curvus (strain 525.92)).